Reading from the N-terminus, the 456-residue chain is Chromosomal replication initiator protein DnaA (456 aa).

The domain I, interacts with DnaA modulators stretch occupies residues 1–83 (MTASLWQQCL…LRFDIGNRPH (83 aa)). The segment at 83–119 (HPVAIARAPARGAAPVNNLQKSWESKADAKPEPNHKS) is domain II. The interval 120–336 (NTNVNYTFEN…GALNRVIANA (217 aa)) is domain III, AAA+ region. The ATP site is built by glycine 164, glycine 166, lysine 167, and threonine 168. Positions 337–456 (NFTGRAINID…YSNLIRTLSS (120 aa)) are domain IV, binds dsDNA.

This sequence belongs to the DnaA family. As to quaternary structure, oligomerizes as a right-handed, spiral filament on DNA at oriC.

It localises to the cytoplasm. Functionally, plays an essential role in the initiation and regulation of chromosomal replication. ATP-DnaA binds to the origin of replication (oriC) to initiate formation of the DNA replication initiation complex once per cell cycle. Binds the DnaA box (a 9 base pair repeat at the origin) and separates the double-stranded (ds)DNA. Forms a right-handed helical filament on oriC DNA; dsDNA binds to the exterior of the filament while single-stranded (ss)DNA is stabiized in the filament's interior. The ATP-DnaA-oriC complex binds and stabilizes one strand of the AT-rich DNA unwinding element (DUE), permitting loading of DNA polymerase. After initiation quickly degrades to an ADP-DnaA complex that is not apt for DNA replication. Binds acidic phospholipids. The chain is Chromosomal replication initiator protein DnaA from Aeromonas salmonicida (strain A449).